The chain runs to 568 residues: Potassium-transporting ATPase potassium-binding subunit (568 aa).

12 helical membrane-spanning segments follow: residues L7 to I27, Y67 to V87, G137 to I157, L180 to I200, F258 to V278, L288 to L308, F332 to V352, A361 to V381, G384 to G404, M421 to I441, L488 to I508, and L535 to G555.

The protein belongs to the KdpA family. The system is composed of three essential subunits: KdpA, KdpB and KdpC.

The protein resides in the cell inner membrane. Part of the high-affinity ATP-driven potassium transport (or Kdp) system, which catalyzes the hydrolysis of ATP coupled with the electrogenic transport of potassium into the cytoplasm. This subunit binds the periplasmic potassium ions and delivers the ions to the membrane domain of KdpB through an intramembrane tunnel. This chain is Potassium-transporting ATPase potassium-binding subunit, found in Photorhabdus laumondii subsp. laumondii (strain DSM 15139 / CIP 105565 / TT01) (Photorhabdus luminescens subsp. laumondii).